The chain runs to 167 residues: Ion-translocating oxidoreductase complex subunit B (167 aa).

The interval 1 to 22 is hydrophobic; sequence MITLIIFSFLSFLLGIILSFTA. Residues 28–87 enclose the 4Fe-4S domain; it reads QEDPIVAIVNELLPQSQCAQCGYSGCYPYAKAIVENSEKINKCIPGGTDLISAISSVLSI. 12 residues coordinate [4Fe-4S] cluster: Cys45, Cys48, Cys53, Cys70, Cys113, Cys116, Cys119, Cys123, Cys143, Cys146, Cys149, and Cys153. 2 consecutive 4Fe-4S ferredoxin-type domains span residues 104 to 133 and 134 to 163; these read NTVL…GAPN and FIHT…IKKE.

The protein belongs to the 4Fe4S bacterial-type ferredoxin family. RnfB subfamily. As to quaternary structure, the complex is composed of six subunits: RnfA, RnfB, RnfC, RnfD, RnfE and RnfG. It depends on [4Fe-4S] cluster as a cofactor.

It is found in the cell inner membrane. In terms of biological role, part of a membrane-bound complex that couples electron transfer with translocation of ions across the membrane. The protein is Ion-translocating oxidoreductase complex subunit B of Buchnera aphidicola subsp. Acyrthosiphon pisum (strain 5A).